Reading from the N-terminus, the 279-residue chain is Chromatin modification-related protein EAF5 (279 aa).

The disordered stretch occupies residues 147-179 (QLQPHANAGKSGSAGTSATITTTTPHMAHSMDP). The span at 154–170 (AGKSGSAGTSATITTTT) shows a compositional bias: low complexity.

It belongs to the EAF5 family. Component of the NuA4 histone acetyltransferase complex composed of at least ACT1, ARP4, YAF9, VID21, SWC4, EAF3, EAF5, EAF6, EAF7, EPL1, ESA1, TRA1 and YNG2.

The protein resides in the nucleus. Component of the NuA4 histone acetyltransferase complex which is involved in transcriptional activation of selected genes principally by acetylation of nucleosomal histone H4 and H2A. The NuA4 complex is also involved in DNA repair. This is Chromatin modification-related protein EAF5 (EAF5) from Saccharomyces cerevisiae (strain ATCC 204508 / S288c) (Baker's yeast).